A 243-amino-acid chain; its full sequence is Carboxy-S-adenosyl-L-methionine synthase (243 aa).

Residues Tyr40, 65 to 67 (GCS), 90 to 91 (DN), 118 to 119 (DI), Asn133, and Arg200 contribute to the S-adenosyl-L-methionine site.

The protein belongs to the class I-like SAM-binding methyltransferase superfamily. Cx-SAM synthase family. In terms of assembly, homodimer.

It carries out the reaction prephenate + S-adenosyl-L-methionine = carboxy-S-adenosyl-L-methionine + 3-phenylpyruvate + H2O. In terms of biological role, catalyzes the conversion of S-adenosyl-L-methionine (SAM) to carboxy-S-adenosyl-L-methionine (Cx-SAM). The protein is Carboxy-S-adenosyl-L-methionine synthase of Shewanella oneidensis (strain ATCC 700550 / JCM 31522 / CIP 106686 / LMG 19005 / NCIMB 14063 / MR-1).